Here is a 1056-residue protein sequence, read N- to C-terminus: Isoleucine--tRNA ligase (1056 aa).

The segment covering M1–S13 has biased composition (polar residues). Residues M1–L26 are disordered. A 'HIGH' region motif is present at residues P63–H73. The 'KMSKS' region signature appears at K632–S636. Position 635 (K635) interacts with ATP.

The protein belongs to the class-I aminoacyl-tRNA synthetase family. IleS type 2 subfamily. In terms of assembly, monomer. The cofactor is Zn(2+).

The protein localises to the cytoplasm. It carries out the reaction tRNA(Ile) + L-isoleucine + ATP = L-isoleucyl-tRNA(Ile) + AMP + diphosphate. Functionally, catalyzes the attachment of isoleucine to tRNA(Ile). As IleRS can inadvertently accommodate and process structurally similar amino acids such as valine, to avoid such errors it has two additional distinct tRNA(Ile)-dependent editing activities. One activity is designated as 'pretransfer' editing and involves the hydrolysis of activated Val-AMP. The other activity is designated 'posttransfer' editing and involves deacylation of mischarged Val-tRNA(Ile). This Tropheryma whipplei (strain TW08/27) (Whipple's bacillus) protein is Isoleucine--tRNA ligase.